Reading from the N-terminus, the 160-residue chain is Sodium/proline symporter (160 aa).

2 helical membrane passes run 6–26 and 68–88; these read PMLV…FIAW and IFIS…GAWI.

The protein belongs to the sodium:solute symporter (SSF) (TC 2.A.21) family.

The protein resides in the cell inner membrane. The enzyme catalyses L-proline(in) + Na(+)(in) = L-proline(out) + Na(+)(out). Catalyzes the sodium-dependent uptake of extracellular L-proline. This Klebsiella oxytoca protein is Sodium/proline symporter.